The sequence spans 732 residues: Coagulation factor XIII A chain (732 aa).

Positions 1–26 are disordered; it reads MSDTPASTFGGRRAVPPNNSNAAEVD. Position 2 is an N-acetylserine (serine 2). Residues 2 to 38 constitute a propeptide, activation peptide; the sequence is SDTPASTFGGRRAVPPNNSNAAEVDLPTEELQGLVPR. Catalysis depends on residues cysteine 315, histidine 374, and aspartate 397. Ca(2+)-binding residues include asparagine 437, aspartate 439, glutamate 486, and glutamate 491. Asparagine 614 carries N-linked (GlcNAc...) asparagine glycosylation.

Belongs to the transglutaminase superfamily. Transglutaminase family. Tetramer of two A chains (F13A1) and two B (F13B) chains. Requires Ca(2+) as cofactor. The activation peptide is released by thrombin.

The protein localises to the cytoplasm. Its subcellular location is the secreted. It carries out the reaction L-glutaminyl-[protein] + L-lysyl-[protein] = [protein]-L-lysyl-N(6)-5-L-glutamyl-[protein] + NH4(+). Functionally, factor XIII is activated by thrombin and calcium ion to a transglutaminase that catalyzes the formation of gamma-glutamyl-epsilon-lysine cross-links between fibrin chains, thus stabilizing the fibrin clot. Also cross-link alpha-2-plasmin inhibitor, or fibronectin, to the alpha chains of fibrin. The chain is Coagulation factor XIII A chain (F13a1) from Mus musculus (Mouse).